Here is a 277-residue protein sequence, read N- to C-terminus: NAD kinase (277 aa).

The active-site Proton acceptor is the Asp55. NAD(+)-binding positions include 55–56, 131–132, Arg157, Asp159, and 170–175; these read DG, NE, and TAYNKS.

This sequence belongs to the NAD kinase family. The cofactor is a divalent metal cation.

The protein localises to the cytoplasm. The enzyme catalyses NAD(+) + ATP = ADP + NADP(+) + H(+). Involved in the regulation of the intracellular balance of NAD and NADP, and is a key enzyme in the biosynthesis of NADP. Catalyzes specifically the phosphorylation on 2'-hydroxyl of the adenosine moiety of NAD to yield NADP. This chain is NAD kinase, found in Streptococcus mutans serotype c (strain ATCC 700610 / UA159).